The chain runs to 393 residues: NAD(P)H-quinone oxidoreductase subunit H, chloroplastic (393 aa).

It belongs to the complex I 49 kDa subunit family. As to quaternary structure, NDH is composed of at least 16 different subunits, 5 of which are encoded in the nucleus.

It is found in the plastid. The protein resides in the chloroplast thylakoid membrane. It carries out the reaction a plastoquinone + NADH + (n+1) H(+)(in) = a plastoquinol + NAD(+) + n H(+)(out). It catalyses the reaction a plastoquinone + NADPH + (n+1) H(+)(in) = a plastoquinol + NADP(+) + n H(+)(out). Its function is as follows. NDH shuttles electrons from NAD(P)H:plastoquinone, via FMN and iron-sulfur (Fe-S) centers, to quinones in the photosynthetic chain and possibly in a chloroplast respiratory chain. The immediate electron acceptor for the enzyme in this species is believed to be plastoquinone. Couples the redox reaction to proton translocation, and thus conserves the redox energy in a proton gradient. The chain is NAD(P)H-quinone oxidoreductase subunit H, chloroplastic from Morus indica (Mulberry).